Consider the following 696-residue polypeptide: Polyribonucleotide nucleotidyltransferase (696 aa).

Positions 486 and 492 each coordinate Mg(2+). One can recognise a KH domain in the interval 553–612 (PRITQKQIPKDRIGELIGPGGKMIRAIIEQSGSEISVDDSGKVTIASPSEESKEKAIAMI). One can recognise an S1 motif domain in the interval 622-690 (GKIYDGVIKR…KMGKIDLSRK (69 aa)).

It belongs to the polyribonucleotide nucleotidyltransferase family. It depends on Mg(2+) as a cofactor.

The protein localises to the cytoplasm. It carries out the reaction RNA(n+1) + phosphate = RNA(n) + a ribonucleoside 5'-diphosphate. Its function is as follows. Involved in mRNA degradation. Catalyzes the phosphorolysis of single-stranded polyribonucleotides processively in the 3'- to 5'-direction. In Leptospira biflexa serovar Patoc (strain Patoc 1 / ATCC 23582 / Paris), this protein is Polyribonucleotide nucleotidyltransferase.